We begin with the raw amino-acid sequence, 928 residues long: MALTPMMVEYMKTKEEYSDCILFYRLGDFYEMFFDDAITVSRELELVLTGKNCGLEERAPMCGIPHHAAAAYIPRLVNKGYKVAICEQLEDPKEAKGIVKRGVVKIITPGTFIDANSSLENDNTYLMTIYESDERIGLAVSDISTGEFKTTSFDNIKITLLDEISKVAPKEILVDKNISQSLIDDIKGITTALITEKDFNEFIVSKEEIIDQFSDLEVSGLVNEREISSRVLLKYIYETQKMSLTNINLLEQYEIINYMTIDGNSRRNLELTESIREKSKKGSLLWVLDKSATSMGGRTIRKWIEEPLIIKSEIEKRLSGVSEAFSSISFNEDLRSSLKDIYDIERIVGKISNKNVNAKDMLSLKASLDKLPSIKELLGTANSELLKEYYENLDELSDIRELLESSIKEEPSLSIKEGNIIKDGYNSEVDELRQSKLHGKEWIAALENREREFTGIKSLKVGYNKVFGYYIEISKSNYNSIPEGRYVRKQTLANAERYITEELKIMEDKILGAEEKLINLEYSLFTDIRDSIEKEIARLKKSARIISNLDGISTLALIALENDYVKPEINEDGIIEIVDGRHPVVEKVIGRGEFVSNNTTLNQSDKELLLITGPNMAGKSTYMRQVALITLMAQIGSFVPASSANISICDKIFTRIGASDDLAGGKSTFMVEMWEVSNILKNATSKSLVLLDEVGRGTSTYDGLSIAWSVIEYITGNENLRCKTLFATHYHELVKLEGVLPGVKNYSVAVKKMKDSVIFLRKIVEGGADESYGIEVAKLAGLPDDVINRAKEILLGLEGENNFDIHKVTNTEIIENEVAVDINQANNVVTITEKACESKSEYIEKVEAKDSFDKAKSNKDDHRIDEKTENSSKKHKNKDSSNNMQLDFTFIEKEAFLKEVSEVDILSLNPMEAMNTLYRLVAEAKKLK.

Position 613 to 620 (613 to 620 (GPNMAGKS)) interacts with ATP. Basic and acidic residues predominate over residues 854 to 872 (KAKSNKDDHRIDEKTENSS). A disordered region spans residues 854–880 (KAKSNKDDHRIDEKTENSSKKHKNKDS).

The protein belongs to the DNA mismatch repair MutS family.

Its function is as follows. This protein is involved in the repair of mismatches in DNA. It is possible that it carries out the mismatch recognition step. This protein has a weak ATPase activity. This Clostridium beijerinckii (strain ATCC 51743 / NCIMB 8052) (Clostridium acetobutylicum) protein is DNA mismatch repair protein MutS.